We begin with the raw amino-acid sequence, 368 residues long: RING finger protein 32 (368 aa).

The interval arginine 45–tyrosine 82 is disordered. Residues cysteine 129–arginine 171 form an RING-type 1; atypical zinc finger. The IQ domain maps to arginine 188 to proline 217. An RING-type 2; atypical zinc finger spans residues cysteine 295 to arginine 358.

The protein resides in the cytoplasm. Its function is as follows. May play a role in sperm formation. The chain is RING finger protein 32 (Rnf32) from Mus musculus (Mouse).